The chain runs to 406 residues: Subtilisin-like protease CPC735_023170 (406 aa).

A signal peptide spans 1 to 20; sequence MRLFQSTCVLVGTVLPLFTA. Residues 21 to 118 constitute a propeptide that is removed on maturation; the sequence is FPISSPREIE…VEPDSMAYVT (98 aa). The 81-residue stretch at 35-115 folds into the Inhibitor I9 domain; that stretch reads KYIITFKKGI…VESVEPDSMA (81 aa). N-linked (GlcNAc...) asparagine glycosylation is present at Asn-125. The Peptidase S8 domain maps to 127-406; it reads TYGPRRISHR…NKLAYNGSGK (280 aa). Catalysis depends on charge relay system residues Asp-161 and His-192. An N-linked (GlcNAc...) asparagine glycan is attached at Asn-239. The segment at 283–309 is disordered; sequence NDGRDAGRNSPGSAPESITVGSINSRR. The N-linked (GlcNAc...) asparagine glycan is linked to Asn-346. The Charge relay system role is filled by Ser-351. A glycan (N-linked (GlcNAc...) asparagine) is linked at Asn-402.

Belongs to the peptidase S8 family.

The protein localises to the secreted. In terms of biological role, secreted subtilisin-like serine protease with keratinolytic activity that contributes to pathogenicity. The protein is Subtilisin-like protease CPC735_023170 of Coccidioides posadasii (strain C735) (Valley fever fungus).